Consider the following 174-residue polypeptide: Protein RESTRICTED TEV MOVEMENT 1 (174 aa).

The Jacalin-type lectin domain maps to 1–152; the sequence is MKIGPVGKHD…LQYIGVYLRP (152 aa).

The protein belongs to the jacalin lectin family. In terms of assembly, self-interacts. Interacts with RTM3. In terms of tissue distribution, expressed at low levels exclusively in phloem-associated cells (e.g. sieve elements and adjacent cells).

The protein localises to the cytoplasm. Functionally, required for the restriction of long-distance movement of the pathogenic tobacco etch virus (TEV) without causing a hypersensitive response or inducing systemic acquired resistance. This chain is Protein RESTRICTED TEV MOVEMENT 1 (RTM1), found in Arabidopsis thaliana (Mouse-ear cress).